The following is a 400-amino-acid chain: CCA-adding enzyme (400 aa).

ATP is bound by residues Gly-28 and Arg-31. The CTP site is built by Gly-28 and Arg-31. Asp-41 and Asp-43 together coordinate Mg(2+). Residues Arg-112, Asp-155, Arg-158, Arg-161, and Arg-164 each coordinate ATP. CTP contacts are provided by Arg-112, Asp-155, Arg-158, Arg-161, and Arg-164.

Belongs to the tRNA nucleotidyltransferase/poly(A) polymerase family. Bacterial CCA-adding enzyme type 3 subfamily. Homodimer. Mg(2+) is required as a cofactor.

It catalyses the reaction a tRNA precursor + 2 CTP + ATP = a tRNA with a 3' CCA end + 3 diphosphate. The catalysed reaction is a tRNA with a 3' CCA end + 2 CTP + ATP = a tRNA with a 3' CCACCA end + 3 diphosphate. Functionally, catalyzes the addition and repair of the essential 3'-terminal CCA sequence in tRNAs without using a nucleic acid template. Adds these three nucleotides in the order of C, C, and A to the tRNA nucleotide-73, using CTP and ATP as substrates and producing inorganic pyrophosphate. tRNA 3'-terminal CCA addition is required both for tRNA processing and repair. Also involved in tRNA surveillance by mediating tandem CCA addition to generate a CCACCA at the 3' terminus of unstable tRNAs. While stable tRNAs receive only 3'-terminal CCA, unstable tRNAs are marked with CCACCA and rapidly degraded. The protein is CCA-adding enzyme of Staphylococcus aureus (strain MRSA252).